Consider the following 430-residue polypeptide: Glutamate-1-semialdehyde 2,1-aminomutase (430 aa).

Lys-265 carries the N6-(pyridoxal phosphate)lysine modification.

It belongs to the class-III pyridoxal-phosphate-dependent aminotransferase family. HemL subfamily. As to quaternary structure, homodimer. The cofactor is pyridoxal 5'-phosphate.

It is found in the cytoplasm. It catalyses the reaction (S)-4-amino-5-oxopentanoate = 5-aminolevulinate. Its pathway is porphyrin-containing compound metabolism; protoporphyrin-IX biosynthesis; 5-aminolevulinate from L-glutamyl-tRNA(Glu): step 2/2. This chain is Glutamate-1-semialdehyde 2,1-aminomutase, found in Helicobacter pylori (strain Shi470).